Reading from the N-terminus, the 178-residue chain is Interleukin-10 (178 aa).

The signal sequence occupies residues 1 to 18 (MHSSALLCCLVFLTGVRA). 2 disulfide bridges follow: Cys30–Cys126 and Cys80–Cys132. N-linked (GlcNAc...) asparagine glycosylation occurs at Asn134.

This sequence belongs to the IL-10 family. As to quaternary structure, homodimer. Interacts with IL10RA and IL10RB.

Its subcellular location is the secreted. Major immune regulatory cytokine that acts on many cells of the immune system where it has profound anti-inflammatory functions, limiting excessive tissue disruption caused by inflammation. Mechanistically, IL10 binds to its heterotetrameric receptor comprising IL10RA and IL10RB leading to JAK1 and STAT2-mediated phosphorylation of STAT3. In turn, STAT3 translocates to the nucleus where it drives expression of anti-inflammatory mediators. Targets antigen-presenting cells (APCs) such as macrophages and monocytes and inhibits their release of pro-inflammatory cytokines including granulocyte-macrophage colony-stimulating factor /GM-CSF, granulocyte colony-stimulating factor/G-CSF, IL-1 alpha, IL-1 beta, IL-6, IL-8 and TNF-alpha. Also interferes with antigen presentation by reducing the expression of MHC-class II and co-stimulatory molecules, thereby inhibiting their ability to induce T cell activation. In addition, controls the inflammatory response of macrophages by reprogramming essential metabolic pathways including mTOR signaling. This is Interleukin-10 (IL10) from Saimiri sciureus (Common squirrel monkey).